We begin with the raw amino-acid sequence, 51 residues long: MNLIFGFVQLFLYHPLFLLLLYIYLVLFIPLKGAINITNIFPTLLKSIGIK.

Residues 10–29 (LFLYHPLFLLLLYIYLVLFI) traverse the membrane as a helical segment.

It is found in the plastid. The protein resides in the chloroplast membrane. This is an uncharacterized protein from Anthoceros angustus (Hornwort).